We begin with the raw amino-acid sequence, 1037 residues long: Presequence protease, mitochondrial (1037 aa).

The N-terminal 28 residues, 1-28 (MWRCGGRQGLCVLRRLSGGHAHHRAWRW), are a transit peptide targeting the mitochondrion. A Zn(2+)-binding site is contributed by His-104. The active-site Proton acceptor is the Glu-107. His-108 is a Zn(2+) binding site. Cys-119 and Cys-556 form a disulfide bridge. The active site involves Glu-180. Residue Glu-205 participates in Zn(2+) binding. An N6-acetyllysine modification is found at Lys-759. Lys-770 is subject to N6-acetyllysine; alternate. Lys-770 bears the N6-succinyllysine; alternate mark. The span at 804 to 814 (GRSKKERRPVR) shows a compositional bias: basic residues. The disordered stretch occupies residues 804-834 (GRSKKERRPVRPHTVEKPVPSSSGGDAHVPH). Residue Lys-849 is modified to N6-succinyllysine. Lys-884 is subject to N6-acetyllysine. Lys-946 carries the post-translational modification N6-succinyllysine.

It belongs to the peptidase M16 family. PreP subfamily. As to quaternary structure, monomer and homodimer; homodimerization is induced by binding of the substrate. Requires Zn(2+) as cofactor. Post-translationally, a disulfide bond locks the enzyme in the closed conformation preventing substrate entry into the catalytic chamber. As to expression, widely expressed. Expressed at higher level in muscle and heart compared to brain, pancreas, liver, lung and placenta.

The protein localises to the mitochondrion. It is found in the mitochondrion matrix. With respect to regulation, mainly exists in a closed and catalytically competent conformation but a closed-to-open switch allows substrate entry into the catalytic chamber. Substrate binding induces closure and dimerization. A disulfide bond may lock the enzyme in a closed conformation preventing substrate entry into the catalytic chamber, participating in redox regulation of the enzyme. Inhibited by metal-chelating agents. Inhibited by nickel and zinc excess, and slightly activated by manganese. In terms of biological role, metalloendopeptidase of the mitochondrial matrix that functions in peptide cleavage and degradation rather than in protein processing. Has an ATP-independent activity. Specifically cleaves peptides in the range of 5 to 65 residues. Shows a preference for cleavage after small polar residues and before basic residues, but without any positional preference. Degrades the transit peptides of mitochondrial proteins after their cleavage. Also degrades other unstructured peptides. It is also able to degrade amyloid-beta protein 40, one of the peptides produced by APP processing, when it accumulates in mitochondrion. It is a highly efficient protease, at least toward amyloid-beta protein 40. Cleaves that peptide at a specific position and is probably not processive, releasing digested peptides intermediates that can be further cleaved subsequently. It is also able to degrade amyloid-beta protein 42. The polypeptide is Presequence protease, mitochondrial (Homo sapiens (Human)).